The sequence spans 548 residues: BTB/POZ domain-containing protein At5g17580 (548 aa).

The BTB domain occupies 7–74 (SDLHINVKGV…CNGSEFKFTS (68 aa)). One can recognise an NPH3 domain in the interval 180–442 (DWKSEDLITI…VNVLCVSQLQ (263 aa)). Tyr383 carries the phosphotyrosine modification. The stretch at 442-493 (QIRDTVAKEIKGMEEKVDEEEEEEIEVSSDEDEMEKMSNKLLGLEIENDECV) forms a coiled coil.

The protein belongs to the NPH3 family.

It functions in the pathway protein modification; protein ubiquitination. Functionally, may act as a substrate-specific adapter of an E3 ubiquitin-protein ligase complex (CUL3-RBX1-BTB) which mediates the ubiquitination and subsequent proteasomal degradation of target proteins. This chain is BTB/POZ domain-containing protein At5g17580, found in Arabidopsis thaliana (Mouse-ear cress).